The following is a 258-amino-acid chain: Protein IMPACT homolog (258 aa).

The RWD domain occupies 10 to 114; sequence EELEAVEAIY…TELDGVLYVE (105 aa). K187 participates in a covalent cross-link: Glycyl lysine isopeptide (Lys-Gly) (interchain with G-Cter in ubiquitin).

It belongs to the IMPACT family. As to quaternary structure, interacts (via N-terminus) with GCN1 (via C-terminus); this interaction reduces the GCN1-GCN20 complex formation and prevents the interaction of GCN1 with GCN2 protein kinase and GCN2 activation in amino acid-starved cells. Interacts (via C-terminus) with ACT1; this interaction occurs in a GCN1-independent manner. Interacts with RPL39; this interaction occurs in a GCN1-independent manner. Associates (via middle region) with ribosomes; this association occurs in a GCN1-independent manner and persists under amino acid starvation conditions.

It is found in the cytoplasm. Its subcellular location is the nucleus. Translational regulator that ensures constant high levels of translation under amino acid starvation. Plays a role as a negative regulator of the GCN2 kinase activity; impairs GCN1-mediated GCN2 activation, and hence GCN2-mediated eIF-2-alpha phosphorylation in amino acid-starved cells and subsequent down-regulation of protein synthesis. In normal conditions, it resides in a actin complex and has no activity. The chain is Protein IMPACT homolog (YIH1) from Saccharomyces cerevisiae (strain ATCC 204508 / S288c) (Baker's yeast).